Consider the following 518-residue polypeptide: Sensor protein kinase HptS (518 aa).

A run of 2 helical transmembrane segments spans residues 20–40 and 222–242; these read IFPV…IYIW and GITL…FGFI. The Histidine kinase domain maps to 297–513; it reads EQLIHSIEHT…LICYKIPLSR (217 aa). His-325 bears the Phosphohistidine; by autocatalysis mark.

In terms of processing, autophosphorylated.

It is found in the cell membrane. It catalyses the reaction ATP + protein L-histidine = ADP + protein N-phospho-L-histidine.. In terms of biological role, member of the two-component regulatory system HptS/HptR that regulates genes involved in hexose phosphate transport system in response to changes in extracellular phosphate sources. May act as a sensor protein kinase which is autophosphorylated at a histidine residue and transfers its phosphate group to the conserved aspartic acid residue in the regulatory domain of HptS. In turn, HptS antagonizes CcpA-dependent transcription of a subset of CcpA-regulated genes involved in antibiotic susceptibility. This is Sensor protein kinase HptS (hptS) from Staphylococcus aureus (strain MRSA252).